The primary structure comprises 265 residues: 3-methyl-2-oxobutanoate hydroxymethyltransferase (265 aa).

Mg(2+) contacts are provided by Asp45 and Asp84. 3-methyl-2-oxobutanoate-binding positions include Asp45–Ser46, Asp84, and Lys112. Mg(2+) is bound at residue Glu114. Glu181 acts as the Proton acceptor in catalysis.

It belongs to the PanB family. In terms of assembly, homodecamer; pentamer of dimers. Mg(2+) is required as a cofactor.

It localises to the cytoplasm. It carries out the reaction 3-methyl-2-oxobutanoate + (6R)-5,10-methylene-5,6,7,8-tetrahydrofolate + H2O = 2-dehydropantoate + (6S)-5,6,7,8-tetrahydrofolate. It functions in the pathway cofactor biosynthesis; (R)-pantothenate biosynthesis; (R)-pantoate from 3-methyl-2-oxobutanoate: step 1/2. In terms of biological role, catalyzes the reversible reaction in which hydroxymethyl group from 5,10-methylenetetrahydrofolate is transferred onto alpha-ketoisovalerate to form ketopantoate. The chain is 3-methyl-2-oxobutanoate hydroxymethyltransferase from Yersinia pseudotuberculosis serotype O:1b (strain IP 31758).